Consider the following 497-residue polypeptide: Beta-glucosidase 8 (497 aa).

Positions 1-22 are cleaved as a signal peptide; that stretch reads MKHFNLLSIILVIVLATSYIDA. Gln-42 is a binding site for a beta-D-glucoside. An N-linked (GlcNAc...) asparagine glycan is attached at Asn-65. Residues His-139 and 184–185 contribute to the a beta-D-glucoside site; that span reads NE. Catalysis depends on Glu-185, which acts as the Proton donor. The N-linked (GlcNAc...) asparagine glycan is linked to Asn-202. Residue Tyr-319 coordinates a beta-D-glucoside. Residue Asn-354 is glycosylated (N-linked (GlcNAc...) asparagine). Positions 387, 430, and 446 each coordinate a beta-D-glucoside. Glu-387 acts as the Nucleophile in catalysis. N-linked (GlcNAc...) asparagine glycosylation is found at Asn-452, Asn-474, and Asn-490.

Belongs to the glycosyl hydrolase 1 family.

The enzyme catalyses Hydrolysis of terminal, non-reducing beta-D-glucosyl residues with release of beta-D-glucose.. The polypeptide is Beta-glucosidase 8 (Arabidopsis thaliana (Mouse-ear cress)).